The sequence spans 89 residues: Large ribosomal subunit protein bL27 (89 aa).

A disordered region spans residues 1–21; the sequence is MAHKKSGGSSRNGRDSNPKYL.

The protein belongs to the bacterial ribosomal protein bL27 family.

The polypeptide is Large ribosomal subunit protein bL27 (Hyphomonas neptunium (strain ATCC 15444)).